The sequence spans 227 residues: MMAAGAALALALWLLMPPVGVGGAGPPPIQDGEFTFLLPAGRKQCFYQSAPANASLETEYQVIGGAGLDVDFTLESPQGVLLVSESRKADGVHTVEPTEAGDYKLCFDNSFSTISEKLVFFELIFDSLQDDEEVEGWAEAVEPEEMLDVKMEDIKESIETMRTRLERSIQMLTLLRAFEARDRNLQEGNLERVNFWSAVNVAVLLLVAVLQVCTLKRFFQDKRPVPT.

Residues 1-23 (MMAAGAALALALWLLMPPVGVGG) form the signal peptide. Residues 24–194 (AGPPPIQDGE…LQEGNLERVN (171 aa)) are Extracellular-facing. One can recognise a GOLD domain in the interval 43–125 (KQCFYQSAPA…EKLVFFELIF (83 aa)). Residues 145–170 (EMLDVKMEDIKESIETMRTRLERSIQ) are a coiled coil. A helical transmembrane segment spans residues 195 to 215 (FWSAVNVAVLLLVAVLQVCTL). Residues 216-227 (KRFFQDKRPVPT) are Cytoplasmic-facing. The COPII vesicle coat-binding motif lies at 218–219 (FF). Positions 218 to 227 (FFQDKRPVPT) match the COPI vesicle coat-binding motif.

This sequence belongs to the EMP24/GP25L family. As to quaternary structure, homodimer in endoplasmic reticulum, endoplasmic reticulum-Golgi intermediate compartment and cis-Golgi network. Interacts with IL1RL1. Interacts with RNF26; this interaction is important to modulate innate immune signaling through the cGAS-STING pathway.

The protein localises to the cell membrane. The protein resides in the endoplasmic reticulum membrane. It localises to the golgi apparatus. Its subcellular location is the cis-Golgi network membrane. It is found in the endoplasmic reticulum-Golgi intermediate compartment membrane. Its function is as follows. Potential role in vesicular protein trafficking, mainly in the early secretory pathway. May act as a cargo receptor at the lumenal side for incorporation of secretory cargo molecules into transport vesicles and may be involved in vesicle coat formation at the cytoplasmic side. Plays a positive role in IL-33-mediated IL-8 and IL-6 production by interacting with interleukin-33 receptor IL1RL1. Plays also a role in the modulation of innate immune signaling through the cGAS-STING pathway by interacting with RNF26. The chain is Transmembrane emp24 domain-containing protein 1 (TMED1) from Pongo abelii (Sumatran orangutan).